The primary structure comprises 172 residues: Stellate protein CG33243 (172 aa).

This sequence belongs to the casein kinase 2 subunit beta family. In terms of assembly, interacts in vitro with the casein kinase 2 alpha subunit (CkII-alpha). The relevance of such interaction is however unclear in vivo. In terms of tissue distribution, probably not expressed in wild-type flies. In males lacking the Y chromosome, it is testis-specific and constitutes the main component of star-shaped crystals.

In terms of biological role, unknown. In males lacking the Y chromosome, its strong overexpression leads to the appearance of proteinaceous star-shaped crystals in the primary spermatocytes causing meiotic drive, possibly by interfering with normal casein kinase 2 activity. This is Stellate protein CG33243 (Ste:CG33243) from Drosophila melanogaster (Fruit fly).